A 345-amino-acid polypeptide reads, in one-letter code: D-amino-acid oxidase (345 aa).

Serine 10, isoleucine 13, serine 49, glycine 53, and asparagine 55 together coordinate FAD. The (R)-lactate site is built by tyrosine 230 and arginine 290. Anthranilate is bound by residues tyrosine 230 and arginine 290. FAD contacts are provided by arginine 290, serine 317, glycine 320, tyrosine 321, and glutamine 322. The Microbody targeting signal signature appears at 343–345; sequence AKL.

Belongs to the DAMOX/DASOX family. FAD serves as cofactor.

The protein resides in the peroxisome matrix. The catalysed reaction is a D-alpha-amino acid + O2 + H2O = a 2-oxocarboxylate + H2O2 + NH4(+). It catalyses the reaction D-methionine + O2 + H2O = 4-methylsulfanyl-2-oxobutanoate + H2O2 + NH4(+). Catalyzes the oxidative deamination of D-amino acids with broad substrate specificity. Enables the organism to utilize D-amino acids as a source of nutrients. Enables the organism to utilize D-alanine as a nitrogen source, although it is not strictly required for this process. Also enables utilization of D-alanine as a carbon source. This chain is D-amino-acid oxidase, found in Candida boidinii (Yeast).